The primary structure comprises 95 residues: Nucleoid-associated protein MMOB0740 (95 aa).

The protein belongs to the YbaB/EbfC family. As to quaternary structure, homodimer.

The protein localises to the cytoplasm. Its subcellular location is the nucleoid. Its function is as follows. Binds to DNA and alters its conformation. May be involved in regulation of gene expression, nucleoid organization and DNA protection. This Mycoplasma mobile (strain ATCC 43663 / 163K / NCTC 11711) (Mesomycoplasma mobile) protein is Nucleoid-associated protein MMOB0740.